We begin with the raw amino-acid sequence, 71 residues long: Movement protein TGBp3 (71 aa).

Over 1–3 the chain is Lumenal; sequence MEA. The chain crosses the membrane as a helical span at residues 4–26; the sequence is GAYLNAIIFVLVATIIAVISVGL. The Cytoplasmic segment spans residues 27–71; that stretch reads TQTEPCTIRITGESITVHACHLDSETIKALATLKPLSLERLSFHQ.

Belongs to the Tymovirales TGBp3 protein family.

The protein resides in the host endoplasmic reticulum membrane. Plays a role in viral cell-to-cell propagation, by facilitating genome transport to neighboring plant cells through plasmosdesmata. May induce the formation of granular vesicles derived from the Endoplasmic reticulum, which align on actin filaments. The chain is Movement protein TGBp3 from Brassica campestris (Field mustard).